The following is a 308-amino-acid chain: Ribosomal RNA large subunit methyltransferase F (308 aa).

This sequence belongs to the methyltransferase superfamily. METTL16/RlmF family.

It is found in the cytoplasm. It carries out the reaction adenosine(1618) in 23S rRNA + S-adenosyl-L-methionine = N(6)-methyladenosine(1618) in 23S rRNA + S-adenosyl-L-homocysteine + H(+). Specifically methylates the adenine in position 1618 of 23S rRNA. The polypeptide is Ribosomal RNA large subunit methyltransferase F (Salmonella dublin (strain CT_02021853)).